Reading from the N-terminus, the 1663-residue chain is Centrosomal protein of 152 kDa (1663 aa).

Residues 1–60 (MSIDFDSGALQTQQEDEEYDKEDYAREQELQQLLTDLPHDMLDDSLSSSPEPSYSDCSGH) are disordered. Over residues 44–57 (DSLSSSPEPSYSDC) the composition is skewed to low complexity. Coiled coils occupy residues 266 to 516 (LQVL…ARLG), 571 to 664 (ELER…KHLL), 696 to 796 (QDKK…VTAK), 843 to 886 (SDCI…VEVA), 946 to 977 (DFTVRQKEFEEKIASMKRELELKAEESQALLK), 1014 to 1047 (RNKLTDTLSTAKVEFEKQKNELIAQKDREMAERL), and 1182 to 1288 (VQQL…KNDM). Disordered regions lie at residues 1383-1408 (ETTQDQRSLQKPAHSHQNNNPLNQNI) and 1595-1628 (KRKDENSGRKYSNKIQEPSATGIHPESKLFSDVG). Residues 1603-1613 (RKYSNKIQEPS) are compositionally biased toward polar residues.

This sequence belongs to the CEP152 family.

It localises to the cytoplasm. Its subcellular location is the cytoskeleton. It is found in the microtubule organizing center. The protein resides in the centrosome. The protein localises to the centriole. Functionally, necessary for centrosome duplication; the function also seems to involve cep63, cdk5rap2 and wdr62 through a stepwise assembled complex at the centrosome that recruits cdk2 required for centriole duplication. Acts as a molecular scaffold facilitating the interaction of plk4 and cpap, 2 molecules involved in centriole formation. Also plays a key role in deuterosome-mediated centriole amplification in multiciliated that can generate more than 100 centrioles. Overexpression of cep152 can drive amplification of centrioles. In Xenopus laevis (African clawed frog), this protein is Centrosomal protein of 152 kDa (cep152).